Reading from the N-terminus, the 433-residue chain is GTPase Obg (433 aa).

The Obg domain maps to 1–159 (MGLTDYCECR…LHVSLEIKYL (159 aa)). The 170-residue stretch at 160–329 (ANVGIVGFPN…LVAQVFALHQ (170 aa)) folds into the OBG-type G domain. GTP is bound by residues 166 to 173 (GFPNTGKS), 191 to 195 (FTTLV), 212 to 215 (DIPG), 282 to 285 (NKTD), and 310 to 312 (ISA). Mg(2+)-binding residues include Ser-173 and Thr-193. The OCT domain maps to 355–433 (ASETDHDPLN…FAGQEFVIND (79 aa)).

Belongs to the TRAFAC class OBG-HflX-like GTPase superfamily. OBG GTPase family. Monomer. It depends on Mg(2+) as a cofactor.

The protein localises to the cytoplasm. An essential GTPase which binds GTP, GDP and possibly (p)ppGpp with moderate affinity, with high nucleotide exchange rates and a fairly low GTP hydrolysis rate. Plays a role in control of the cell cycle, stress response, ribosome biogenesis and in those bacteria that undergo differentiation, in morphogenesis control. This Mycoplasma pneumoniae (strain ATCC 29342 / M129 / Subtype 1) (Mycoplasmoides pneumoniae) protein is GTPase Obg.